Consider the following 463-residue polypeptide: NADH dehydrogenase [ubiquinone] iron-sulfur protein 2, mitochondrial (463 aa).

Residues 1 to 33 (MAALRALCGFRGVAAQVLRPGAGVRLPIQPSRG) constitute a mitochondrion transit peptide. Residue Lys62 is modified to N6-acetyllysine. Arg118 carries the symmetric dimethylarginine modification. Residues Cys326, Cys332, and Cys347 each coordinate [4Fe-4S] cluster.

It belongs to the complex I 49 kDa subunit family. In terms of assembly, core subunit of respiratory chain NADH dehydrogenase (Complex I) which is composed of 45 different subunits. Component of the iron-sulfur (IP) fragment of the enzyme. Interacts with NDUFAF3. Interacts with NDUFAF7. Interacts with CERS2. The cofactor is [4Fe-4S] cluster. Dimethylation at Arg-118 by NDUFAF7 takes place after NDUFS2 assembles into the complex I, leading to stabilize the early intermediate complex.

The protein localises to the mitochondrion inner membrane. It carries out the reaction a ubiquinone + NADH + 5 H(+)(in) = a ubiquinol + NAD(+) + 4 H(+)(out). Core subunit of the mitochondrial membrane respiratory chain NADH dehydrogenase (Complex I) which catalyzes electron transfer from NADH through the respiratory chain, using ubiquinone as an electron acceptor. Essential for the catalytic activity of complex I. Essential for the assembly of complex I. Redox-sensitive, critical component of the oxygen-sensing pathway in the pulmonary vasculature which plays a key role in acute pulmonary oxygen-sensing and hypoxic pulmonary vasoconstriction. Plays an important role in carotid body sensing of hypoxia. Essential for glia-like neural stem and progenitor cell proliferation, differentiation and subsequent oligodendrocyte or neuronal maturation. The chain is NADH dehydrogenase [ubiquinone] iron-sulfur protein 2, mitochondrial (NDUFS2) from Homo sapiens (Human).